The chain runs to 313 residues: Pseudouridine-5'-phosphate glycosidase (313 aa).

Glu26 acts as the Proton donor in catalysis. 2 residues coordinate substrate: Lys87 and Ala107. Asp139 is a Mn(2+) binding site. 141–143 (SAD) contacts substrate. Residue Lys160 is the Nucleophile of the active site.

The protein belongs to the pseudouridine-5'-phosphate glycosidase family. Homotrimer. It depends on Mn(2+) as a cofactor.

It catalyses the reaction D-ribose 5-phosphate + uracil = psi-UMP + H2O. Catalyzes the reversible cleavage of pseudouridine 5'-phosphate (PsiMP) to ribose 5-phosphate and uracil. Functions biologically in the cleavage direction, as part of a pseudouridine degradation pathway. The protein is Pseudouridine-5'-phosphate glycosidase of Corynebacterium aurimucosum (strain ATCC 700975 / DSM 44827 / CIP 107346 / CN-1) (Corynebacterium nigricans).